A 365-amino-acid polypeptide reads, in one-letter code: Cobalt-precorrin-5B C(1)-methyltransferase (365 aa).

The protein belongs to the CbiD family.

It catalyses the reaction Co-precorrin-5B + S-adenosyl-L-methionine = Co-precorrin-6A + S-adenosyl-L-homocysteine. The protein operates within cofactor biosynthesis; adenosylcobalamin biosynthesis; cob(II)yrinate a,c-diamide from sirohydrochlorin (anaerobic route): step 6/10. In terms of biological role, catalyzes the methylation of C-1 in cobalt-precorrin-5B to form cobalt-precorrin-6A. The sequence is that of Cobalt-precorrin-5B C(1)-methyltransferase from Moorella thermoacetica (strain ATCC 39073 / JCM 9320).